Here is a 105-residue protein sequence, read N- to C-terminus: Large ribosomal subunit protein bL21 (105 aa).

Belongs to the bacterial ribosomal protein bL21 family. Part of the 50S ribosomal subunit. Contacts protein L20.

Functionally, this protein binds to 23S rRNA in the presence of protein L20. This Frankia casuarinae (strain DSM 45818 / CECT 9043 / HFP020203 / CcI3) protein is Large ribosomal subunit protein bL21.